A 1017-amino-acid chain; its full sequence is MAPRALWSCYLCCLLTIATEAASYPPRGYSLYTGGTGALSPGGPQAQNSPRPASRHRNWCAYVVTRTVSCVLEDGVETIVKPDYQPCGWGQPHCSRSIMYRSFLRPRYRVAYKTVTDMEWRCCQGYGGDDCGEGPASVLGPAPSTPLPRPRPVRPNLSGSSAGSHLSGLGGEGPVESEKVQQLERQVKSLTKELQGLRGVLQGMNGRLAEDVQRAVDTVFNGRQQPADAAARPGVHETLSEIQQQLQLLDNRVSTHDQELGHLNNHHNGGPGGGGRASGPVPVPSGPSEELLRQLERQLQESCSVCLTGLDGFRQQQQEDRERLRTLEKLMSSMEERQQQLVGPAMARRPPQECCPPELGRRVSELERRLDVVTGSLTVLSGRRGSELGGAAGQGGHPPGYTSLASRLSRLEDRFNSTLGPSEEQEKNWPGGPGRLGHWLPAAPGRLEKLEGLLANVSRELGGRMDLLEEQVAGAVRTCGQICSGAPGEQDSRVNEILSALERRVLDSEGRLQLVGSGLHEAEAAGEAQQAVLEGLQGLLSRLRERMDAQEETAAEILLRLNLTAAQLSQLEGLLQARGDEGCGACGGVQEELGRLRDGVERCSCPLLPPRGPGAGPGVGGPSRGPLDGFSVFGGSSGSALQALQGELSEVILTFSSLNDSLHELQTTVEGQGADLADLGATKDSIISEINRLQQEATEHVTESEERFRGLEEGQAQAGQCPSLEGRLGRLEGVCERLDTVAGGLQGLREGLSRHVAGLWAAVRESNSTSLTQAALLEKLLGGQAGLGRRLGALNNSLLLLEDRLQQLSLKDFTGPSGKAGPPGPPGLQGPSGPAGPPGPPGKDGQQGAIGPPGPQGEQGAEGAPAAPVPRVAFSAALSLPRSEPGTVPFDRVLLNDGGYYDPETGVFTAPLAGRYLLSAVLTGHRHEKVEAVLSRSNLGVARIDSGGYEPEGLENKPVAESQPSPGALGVFSLILPLQVGDTVCIDLVMGQLAHSEEPLTIFSGALLYEDTELEQV.

The signal sequence occupies residues 1-21 (MAPRALWSCYLCCLLTIATEA). Residues 56–133 (HRNWCAYVVT…QGYGGDDCGE (78 aa)) form the EMI domain. 3 disulfide bridges follow: Cys-60-Cys-123, Cys-87-Cys-94, and Cys-122-Cys-131. 2 disordered regions span residues 134-180 (GPAS…SEKV) and 259-289 (ELGH…GPSE). A compositionally biased stretch (low complexity) spans 154 to 167 (RPNLSGSSAGSHLS). Asn-156 is a glycosylation site (N-linked (GlcNAc...) asparagine). Coiled coils occupy residues 171–211 (GEGP…LAED), 237–266 (ETLS…LNNH), and 310–374 (LDGF…DVVT). The segment at 383–403 (RRGSELGGAAGQGGHPPGYTS) is disordered. The segment covering 387–398 (ELGGAAGQGGHP) has biased composition (gly residues). Residues Asn-416, Asn-456, Asn-562, and Asn-659 are each glycosylated (N-linked (GlcNAc...) asparagine). Residues 519–573 (LHEAEAAGEAQQAVLEGLQGLLSRLRERMDAQEETAAEILLRLNLTAAQLSQLEG) are a coiled coil. Positions 676–697 (LADLGATKDSIISEINRLQQEA) form a coiled coil. N-linked (GlcNAc...) asparagine glycans are attached at residues Asn-767 and Asn-795. Residues 789-809 (RRLGALNNSLLLLEDRLQQLS) adopt a coiled-coil conformation. Positions 811 to 820 (KDFTGPSGKA) are enriched in low complexity. The tract at residues 811-866 (KDFTGPSGKAGPPGPPGLQGPSGPAGPPGPPGKDGQQGAIGPPGPQGEQGAEGAPA) is disordered. The Collagen-like domain maps to 815-865 (GPSGKAGPPGPPGLQGPSGPAGPPGPPGKDGQQGAIGPPGPQGEQGAEGAP). Positions 822-841 (PPGPPGLQGPSGPAGPPGPP) are enriched in pro residues. Low complexity predominate over residues 843 to 866 (KDGQQGAIGPPGPQGEQGAEGAPA). The C1q domain occupies 867–1014 (APVPRVAFSA…GALLYEDTEL (148 aa)).

As to quaternary structure, homotrimer associated through a moderately stable interaction of the C-terminal globular C1q domains, allowing the nucleation of the triple helix and then a further quaternary assembly to higher-order polymers via intermolecular disulfide bonds. Interacts with EMILIN2. Interacts with EFEMP2; this interaction promotes the incorporation of EFEMP2 into the extracellular matrix.

It is found in the secreted. The protein resides in the extracellular space. Its subcellular location is the extracellular matrix. Its function is as follows. Involved in elastic and collagen fibers formation. It is required for EFEMP2 deposition into the extracellular matrix, and collagen network assembly and cross-linking via protein-lysine 6-oxidase/LOX activity. May be responsible for anchoring smooth muscle cells to elastic fibers, and may be involved the processes that regulate vessel assembly. Has cell adhesive capacity. May have a function in placenta formation and initial organogenesis and a later role in interstitial connective tissue. The polypeptide is EMILIN-1 (Emilin1) (Mus musculus (Mouse)).